The primary structure comprises 329 residues: PDZ and LIM domain protein 1 (329 aa).

At Thr2 the chain carries N-acetylthreonine. The region spanning 3 to 85 (TQQIDLQGPG…NLTLTVARSE (83 aa)) is the PDZ domain. Ser90 and Ser130 each carry phosphoserine. Tyr144 is modified (phosphotyrosine). The LIM zinc-binding domain occupies 258 to 317 (PMCDKCGTGIVGVFVKLRDRHRHPECYVCTDCGTNLKQKGHFFVEDQIYCEKHARERVTP). Cys260, Cys263, His280, Cys283, Cys286, Cys289, Cys307, and His310 together coordinate Zn(2+). Thr316 carries the phosphothreonine modification. Tyr321 bears the Phosphotyrosine mark.

As to quaternary structure, interacts with ACTN1, ACTN2 and ACTN4. Interacts with PDLIM4. In terms of tissue distribution, strongly expressed in the heart and skeletal muscle, moderately expressed in the spleen, small intestine, colon, placenta, and lung. A lower level expression is seen in liver, thymus, kidney, prostate and pancreas and is not found in the brain, testis, ovary, and peripheral blood leukocytes.

It is found in the cytoplasm. The protein resides in the cytoskeleton. It localises to the myofibril. The protein localises to the sarcomere. Its subcellular location is the z line. Its function is as follows. Cytoskeletal protein that may act as an adapter that brings other proteins (like kinases) to the cytoskeleton. Involved in assembly, disassembly and directioning of stress fibers in fibroblasts. Required for the localization of ACTN1 and PALLD to stress fibers. Required for cell migration and in maintaining cell polarity of fibroblasts. This Homo sapiens (Human) protein is PDZ and LIM domain protein 1 (PDLIM1).